Reading from the N-terminus, the 462-residue chain is HEPACAM family member 2 (462 aa).

Residues 1 to 31 (MGQDAFMEPFGDTLGVFQCKIYLLLFGACSG) form the signal peptide. N-linked (GlcNAc...) asparagine glycans are attached at residues Asn85, Asn129, and Asn165. 2 Ig-like C2-type domains span residues 149–233 (PVVQ…SDII) and 235–331 (PIIY…THFT). Intrachain disulfides connect Cys170/Cys219 and Cys270/Cys315. A glycan (N-linked (GlcNAc...) asparagine) is linked at Asn320. The helical transmembrane segment at 352-372 (LASITGISLFLIISMCLLFLW) threads the bilayer. The Cytoplasmic segment spans residues 373 to 462 (KKYQPYKVIK…IPAQQQDHPE (90 aa)).

In terms of processing, poly-ADP-ribosylated (PARsylated) by tankyrase TNKS during late G2 and prophase, leading to translocation to mitotic centrosomes. N-glycosylated. In terms of tissue distribution, widely expressed.

It localises to the golgi apparatus membrane. Its subcellular location is the cytoplasm. It is found in the cytoskeleton. The protein localises to the spindle. The protein resides in the microtubule organizing center. It localises to the centrosome. Its subcellular location is the midbody. Functionally, required during prometaphase for centrosome maturation. Following poly-ADP-ribosylation (PARsylation) by TNKS, translocates from the Golgi apparatus to mitotic centrosomes and plays a key role in the formation of robust microtubules for prompt movement of chromosomes: anchors AKAP9/CG-NAP, a scaffold protein of the gamma-tubulin ring complex and promotes centrosome maturation. The polypeptide is HEPACAM family member 2 (HEPACAM2) (Homo sapiens (Human)).